A 1942-amino-acid chain; its full sequence is Probable helicase with zinc finger domain (1942 aa).

The C3H1-type zinc finger occupies 178–206 (SEEYTLCKRFLEQGICRYGAQCTSAHSQE). Position 248 is a phosphoserine (S248). Residue 668–675 (GPYGTGKT) participates in ATP binding. The DEAA box signature appears at 794-797 (DEAA). The span at 1117 to 1127 (SGSTNKQQQSP) shows a compositional bias: polar residues. Residues 1117-1141 (SGSTNKQQQSPPKGKSLHHTQNDHF) are disordered. T1163 carries the post-translational modification Phosphothreonine. R1245 is subject to Omega-N-methylarginine. Disordered regions lie at residues 1246–1345 (GSPI…INLP), 1386–1429 (NLPE…GPNN), 1527–1552 (QGSA…GLHQ), and 1608–1637 (RQVQ…FNDN). Composition is skewed to basic and acidic residues over residues 1268–1281 (HQEK…RNGK) and 1292–1308 (NKIR…KQVD). Residues 1399-1412 (NQVVQQQSQLNQQP) show a composition bias toward low complexity. Position 1614 is a phosphoserine (S1614). The span at 1623–1636 (SSTDHSSHFSNFND) shows a compositional bias: low complexity. Residues S1645, S1738, S1741, and S1766 each carry the phosphoserine modification. 3 disordered regions span residues 1729 to 1779 (FHPL…TPQD), 1792 to 1843 (NQSS…PEDQ), and 1870 to 1942 (MPNK…SYFK). Over residues 1731–1745 (PLSSRTVSSSSLPSL) the composition is skewed to low complexity. Polar residues-rich tracts occupy residues 1761-1779 (RISS…TPQD) and 1792-1825 (NQSS…SRTA). 2 stretches are compositionally biased toward low complexity: residues 1876-1888 (AESA…QSSA) and 1920-1942 (LSLF…SYFK).

This sequence belongs to the DNA2/NAM7 helicase family. Interacts with SMYD2. Interacts with POLR2A. Interacts with SMYD3; the interaction may bridge SMYD3 and RNA polymerase II. As to expression, expressed predominantly in thymus and brain. Expression is down-regulated in 28 of 95 tested cancer cell lines.

Its subcellular location is the nucleus. Functionally, may act as a helicase that plays a role in RNA metabolism in multiple tissues and organs within the developing embryo. The sequence is that of Probable helicase with zinc finger domain (HELZ) from Homo sapiens (Human).